The following is a 382-amino-acid chain: Albumin (382 aa).

Albumin domains lie at 1-178 (KCRI…ILLE) and 179-377 (AALK…GLLQ). 12 disulfide bridges follow: C2/C48, C47/C55, C67/C81, C80/C91, C116/C161, C160/C169, C192/C238, C237/C248, C261/C277, C276/C287, C314/C359, and C358/C367. 2 residues coordinate Ca(2+): D51 and E54. D51 is a Zn(2+) binding site.

The protein belongs to the ALB/AFP/VDB family. In terms of tissue distribution, plasma.

It localises to the secreted. Its function is as follows. Serum albumin, the main protein of plasma, has a good binding capacity for water, Ca(2+), Na(+), K(+), fatty acids, hormones, bilirubin and drugs. Its main function is the regulation of the colloidal osmotic pressure of blood. This Aquarana catesbeiana (American bullfrog) protein is Albumin (ALB).